We begin with the raw amino-acid sequence, 763 residues long: Sphingoid long-chain bases kinase 1 (763 aa).

The disordered stretch occupies residues 34–81 (TGGSQQSSPIVFPEKRNKKVKASSRRGEVTNDPQVKPKPDEHRIDIGG). Basic and acidic residues predominate over residues 58 to 81 (RRGEVTNDPQVKPKPDEHRIDIGG). Residues 245 to 384 (KSAPKMLVIL…TDVFAVEWIH (140 aa)) enclose the DAGKc domain. ATP contacts are provided by residues 255–257 (NPR) and Thr-287. 313-316 (GGDG) is a substrate binding site. The active-site Proton donor/acceptor is the Asp-315. ATP is bound by residues Glu-320, 345 to 347 (GSD), and Arg-418. The segment at 561-603 (MGLTSVQDPPTRCSWGNTGGQDREDISSTVSDPGPIWDAGPKW) is disordered. Residue 733 to 735 (DGE) coordinates ATP.

In terms of tissue distribution, expressed in roots, stems, leaves and at higher levels in flowers.

In terms of biological role, involved in the production of sphingolipid metabolites. Active on sphingosine, phytosphingosine (PHS, 4-hydroxysphinganine), D-erythro-dihydrosphingosine, D-erythro-sphingosine and trans-4, trans-8-sphingadienine, an LCB found exclusively in plants, but not on N-acetyl-dihydrosphingosine (C2-dihydroceramide) and D-threo-dihydrosphingosine. In Arabidopsis thaliana (Mouse-ear cress), this protein is Sphingoid long-chain bases kinase 1 (LCBK1).